The sequence spans 278 residues: Release factor glutamine methyltransferase (278 aa).

Residues 116–120 (GTGTG), D139, W168, and N182 contribute to the S-adenosyl-L-methionine site. Position 182–185 (182–185 (NPPY)) interacts with substrate.

Belongs to the protein N5-glutamine methyltransferase family. PrmC subfamily.

It carries out the reaction L-glutaminyl-[peptide chain release factor] + S-adenosyl-L-methionine = N(5)-methyl-L-glutaminyl-[peptide chain release factor] + S-adenosyl-L-homocysteine + H(+). Functionally, methylates the class 1 translation termination release factors RF1/PrfA and RF2/PrfB on the glutamine residue of the universally conserved GGQ motif. The sequence is that of Release factor glutamine methyltransferase from Cereibacter sphaeroides (strain ATCC 17023 / DSM 158 / JCM 6121 / CCUG 31486 / LMG 2827 / NBRC 12203 / NCIMB 8253 / ATH 2.4.1.) (Rhodobacter sphaeroides).